Reading from the N-terminus, the 462-residue chain is Serine--tRNA ligase, cytoplasmic (462 aa).

Residue Lys-241 forms a Glycyl lysine isopeptide (Lys-Gly) (interchain with G-Cter in URM1) linkage. Thr-246–Glu-248 provides a ligand contact to L-serine. ATP is bound by residues Arg-279 to Glu-281 and Val-295. Glu-302 contributes to the L-serine binding site. Glycyl lysine isopeptide (Lys-Gly) (interchain with G-Cter in URM1) cross-links involve residues Lys-350 and Lys-351. Position 366 to 369 (Glu-366 to Ser-369) interacts with ATP. 2 positions are modified to cysteine persulfide: Cys-373 and Cys-400. Thr-404 is an L-serine binding site.

The protein belongs to the class-II aminoacyl-tRNA synthetase family. Type-1 seryl-tRNA synthetase subfamily. As to quaternary structure, homodimer; the tRNA molecule probably binds across the dimer. Interacts with ABP140; interaction is required for the tRNA N(3)-methylcytidine methyltransferase activity of ABP140. In terms of processing, conjugated to URM1, a ubiquitin-like protein, in response to oxidative stresses. The attachment of URM1 to lysine residues exclusively depends on the presence of a peroxidatic cysteine in the target protein, with low specificity for the particular residue, motif, or structural context at which urmylation can occur. The URM1-conjugation reaction is mechanistically and directly coupled to the process of cysteine persulfidation, transfering the sulfur atom of the URM1 thiocarboxyl group to redox-active cysteine residues in the target protein if it is exposed to oxidative conditions. Post-translationally, persulfidated on specific redox-active cysteine residues. Persulfidation (also called protein S-sulfhydration) may provide a molecular mechanism that enables cells to protect vulnerable cysteine residues from reactive oxygen species (ROS) under stress conditions.

The protein localises to the cytoplasm. The protein resides in the cytosol. The enzyme catalyses tRNA(Ser) + L-serine + ATP = L-seryl-tRNA(Ser) + AMP + diphosphate + H(+). Its function is as follows. Catalyzes the attachment of serine to tRNA(Ser) in a two-step reaction: serine is first activated by ATP to form Ser-AMP and then transferred to the acceptor end of tRNA(Ser). In Saccharomyces cerevisiae (strain ATCC 204508 / S288c) (Baker's yeast), this protein is Serine--tRNA ligase, cytoplasmic (SES1).